The primary structure comprises 67 residues: Ubiquinol-cytochrome c reductase complex assembly factor 6 (67 aa).

Residues 1 to 8 (MPGGVPWS) are Mitochondrial matrix-facing. Residues 9–25 (AYLKMLSSSLLAMCAGA) form a helical; Signal-anchor for type II membrane protein membrane-spanning segment. The Mitochondrial intermembrane segment spans residues 26–67 (QVVHWYYRPDLTIPEIPPKPGELKTELLGLKERRHEPHVSQQ).

It belongs to the UQCC6 family. Interacts with UQCRC1. Interacts with UQCRQ. Interacts with UQCC5. Forms a complex, named COMB/coordinator of mitochondrial CYTB biogenesis, composed of UQCC1, UQCC2, UQCC4, UQCC5 and UQCC6; stabilizes nascent cytochrome b/MT-CYB and promotes its membrane insertion. Forms a complex, named COMA, composed of UQCC1, UQCC2 and UQCC4; activates MT-CYB translation. Forms a complex, named COMC, composed of UQCC1, UQCC2; UQCC3 and UQCC4; mediates MT-CYB hemylation and association with the first nuclear-encoded complex III subunit UQCRQ. Interacts with MT-CYB. In terms of tissue distribution, highly expressed in brown adipose, cardiac and skeletal muscle (at protein level).

It is found in the mitochondrion inner membrane. Its function is as follows. Required for the assembly and stability of the mitochondrial ubiquinol-cytochrome c reductase complex (complex III or cytochrome b-c1 complex), a multisubunit transmembrane complex that is part of the mitochondrial electron transport chain (ETC) which drives oxidative phosphorylation. Mediates early complex III biogenesis. Participates in regulating the levels of electron transport chain proteins, and therefore energy supply, in response to changes in energy demand. Also required for cytochrome c oxidase complex (complex IV) assembly. In Mus musculus (Mouse), this protein is Ubiquinol-cytochrome c reductase complex assembly factor 6.